Reading from the N-terminus, the 98-residue chain is Cell division protein FtsB (98 aa).

The Cytoplasmic portion of the chain corresponds to 1 to 3; that stretch reads MKR. A helical transmembrane segment spans residues 4-21; that stretch reads LLFVLIALLAMLQYRLWL. Topologically, residues 22 to 98 are periplasmic; sequence GDKSLADSFH…GGERGGVPEN (77 aa). Positions 31-74 form a coiled coil; it reads HLQEQIKLQQQSNAQLVARNQVLREEISDLRSGTEALEERARNE.

Belongs to the FtsB family. As to quaternary structure, part of a complex composed of FtsB, FtsL and FtsQ.

It localises to the cell inner membrane. Essential cell division protein. May link together the upstream cell division proteins, which are predominantly cytoplasmic, with the downstream cell division proteins, which are predominantly periplasmic. The protein is Cell division protein FtsB of Shewanella pealeana (strain ATCC 700345 / ANG-SQ1).